A 598-amino-acid chain; its full sequence is Aspartate--tRNA(Asp/Asn) ligase (598 aa).

Residue E172 coordinates L-aspartate. Residues 196–199 (QLFK) form an aspartate region. Position 218 (R218) interacts with L-aspartate. Residues 218 to 220 (RDE) and Q227 each bind ATP. An L-aspartate-binding site is contributed by H455. E489 provides a ligand contact to ATP. An L-aspartate-binding site is contributed by R496. 541–544 (GLDR) is an ATP binding site.

The protein belongs to the class-II aminoacyl-tRNA synthetase family. Type 1 subfamily. Homodimer.

The protein localises to the cytoplasm. The catalysed reaction is tRNA(Asx) + L-aspartate + ATP = L-aspartyl-tRNA(Asx) + AMP + diphosphate. Its function is as follows. Aspartyl-tRNA synthetase with relaxed tRNA specificity since it is able to aspartylate not only its cognate tRNA(Asp) but also tRNA(Asn). Reaction proceeds in two steps: L-aspartate is first activated by ATP to form Asp-AMP and then transferred to the acceptor end of tRNA(Asp/Asn). The polypeptide is Aspartate--tRNA(Asp/Asn) ligase (Burkholderia mallei (strain ATCC 23344)).